Here is a 207-residue protein sequence, read N- to C-terminus: ATP synthase subunit 5, mitochondrial (207 aa).

Belongs to the ATPase delta chain family. As to quaternary structure, F-type ATPases have 2 components, CF(1) - the catalytic core - and CF(0) - the membrane proton channel. CF(1) has five subunits: alpha(3), beta(3), gamma(1), delta(1), epsilon(1). CF(0) has three main subunits: a, b and c.

It localises to the mitochondrion. The protein localises to the mitochondrion inner membrane. Functionally, mitochondrial membrane ATP synthase (F(1)F(0) ATP synthase or Complex V) produces ATP from ADP in the presence of a proton gradient across the membrane which is generated by electron transport complexes of the respiratory chain. F-type ATPases consist of two structural domains, F(1) - containing the extramembraneous catalytic core and F(0) - containing the membrane proton channel, linked together by a central stalk and a peripheral stalk. During catalysis, ATP synthesis in the catalytic domain of F(1) is coupled via a rotary mechanism of the central stalk subunits to proton translocation. Part of the complex F(0) domain and the peripheric stalk, which acts as a stator to hold the catalytic alpha(3)beta(3) subcomplex and subunit a/ATP6 static relative to the rotary elements. The protein is ATP synthase subunit 5, mitochondrial (ATP5) of Eremothecium gossypii (strain ATCC 10895 / CBS 109.51 / FGSC 9923 / NRRL Y-1056) (Yeast).